Consider the following 433-residue polypeptide: Glutamate-1-semialdehyde 2,1-aminomutase (433 aa).

At K271 the chain carries N6-(pyridoxal phosphate)lysine.

The protein belongs to the class-III pyridoxal-phosphate-dependent aminotransferase family. HemL subfamily. Homodimer. The cofactor is pyridoxal 5'-phosphate.

The protein resides in the cytoplasm. The catalysed reaction is (S)-4-amino-5-oxopentanoate = 5-aminolevulinate. The protein operates within porphyrin-containing compound metabolism; protoporphyrin-IX biosynthesis; 5-aminolevulinate from L-glutamyl-tRNA(Glu): step 2/2. It participates in porphyrin-containing compound metabolism; chlorophyll biosynthesis. The sequence is that of Glutamate-1-semialdehyde 2,1-aminomutase from Prochlorococcus marinus (strain AS9601).